The following is a 450-amino-acid chain: UDP-N-acetylmuramoylalanine--D-glutamate ligase (450 aa).

Residue 119-125 (GSNGKTT) participates in ATP binding.

The protein belongs to the MurCDEF family.

It is found in the cytoplasm. The enzyme catalyses UDP-N-acetyl-alpha-D-muramoyl-L-alanine + D-glutamate + ATP = UDP-N-acetyl-alpha-D-muramoyl-L-alanyl-D-glutamate + ADP + phosphate + H(+). The protein operates within cell wall biogenesis; peptidoglycan biosynthesis. In terms of biological role, cell wall formation. Catalyzes the addition of glutamate to the nucleotide precursor UDP-N-acetylmuramoyl-L-alanine (UMA). This is UDP-N-acetylmuramoylalanine--D-glutamate ligase from Bacillus cereus (strain B4264).